Consider the following 234-residue polypeptide: Synaptogyrin-1 (234 aa).

M1 is modified (N-acetylmethionine). The Cytoplasmic portion of the chain corresponds to 1-23 (MEGGAYGAGKAGGAFDPYALVRQ). Residues 20–173 (LVRQPHTILR…QAVLAFQRYQ (154 aa)) enclose the MARVEL domain. Residues 24 to 44 (PHTILRVVSWLFSIVVFGSIV) traverse the membrane as a helical segment. At 45 to 71 (NEGYLNSASEGEEFCIYNRNPNACSYG) the chain is on the lumenal side. The helical transmembrane segment at 72–92 (VAVGVLAFLTCLLYLALDVYF) threads the bilayer. At 93 to 103 (PQISSVKDRKK) the chain is on the cytoplasmic side. Residues 104 to 124 (AVLSDIGVSAFWAFLWFVGFC) traverse the membrane as a helical segment. The Lumenal segment spans residues 125-148 (YLANQWQVSKPKDNPLNEGTDAAR). The helical transmembrane segment at 149–169 (AAIAFSFFSIFTWAGQAVLAF) threads the bilayer. Over 170–234 (QRYQIGADSA…EPQGYQSQGY (65 aa)) the chain is Cytoplasmic. Positions 192 to 234 (SSMPYAPYVEPSTGPDPAGMGGTYQQPANTFDTEPQGYQSQGY) are disordered. Positions 214–234 (TYQQPANTFDTEPQGYQSQGY) are enriched in polar residues.

The protein belongs to the synaptogyrin family.

The protein localises to the cytoplasmic vesicle. It localises to the secretory vesicle. It is found in the synaptic vesicle membrane. The protein resides in the melanosome. May play a role in regulated exocytosis. Modulates the localization of synaptophysin/SYP into synaptic-like microvesicles and may therefore play a role in synaptic-like microvesicle formation and/or maturation. Involved in the regulation of short-term and long-term synaptic plasticity. The polypeptide is Synaptogyrin-1 (Pongo abelii (Sumatran orangutan)).